Here is a 567-residue protein sequence, read N- to C-terminus: Proline--tRNA ligase (567 aa).

Belongs to the class-II aminoacyl-tRNA synthetase family. ProS type 1 subfamily. Homodimer.

Its subcellular location is the cytoplasm. It catalyses the reaction tRNA(Pro) + L-proline + ATP = L-prolyl-tRNA(Pro) + AMP + diphosphate. Functionally, catalyzes the attachment of proline to tRNA(Pro) in a two-step reaction: proline is first activated by ATP to form Pro-AMP and then transferred to the acceptor end of tRNA(Pro). As ProRS can inadvertently accommodate and process non-cognate amino acids such as alanine and cysteine, to avoid such errors it has two additional distinct editing activities against alanine. One activity is designated as 'pretransfer' editing and involves the tRNA(Pro)-independent hydrolysis of activated Ala-AMP. The other activity is designated 'posttransfer' editing and involves deacylation of mischarged Ala-tRNA(Pro). The misacylated Cys-tRNA(Pro) is not edited by ProRS. The chain is Proline--tRNA ligase from Campylobacter curvus (strain 525.92).